Reading from the N-terminus, the 803-residue chain is Bifunctional enzyme MurC/Ddl (803 aa).

The UDP-N-acetylmuramate--alanine ligase stretch occupies residues 1-446 (MMKSLFYHFI…GEKLRDFEPQ (446 aa)). ATP-binding positions include 111–117 (GSHGKTT) and 600–655 (VEAF…CKEI). The interval 447–803 (KLHLGIICGG…SFVDQAFAIQ (357 aa)) is D-alanine--D-alanine ligase. Positions 567-778 (KRFMSDLGIP…YEQIVHQLVI (212 aa)) constitute an ATP-grasp domain. Positions 732, 745, and 747 each coordinate Mg(2+).

In the N-terminal section; belongs to the MurCDEF family. It in the C-terminal section; belongs to the D-alanine--D-alanine ligase family. Requires Mg(2+) as cofactor. Mn(2+) serves as cofactor.

It localises to the cytoplasm. It carries out the reaction UDP-N-acetyl-alpha-D-muramate + L-alanine + ATP = UDP-N-acetyl-alpha-D-muramoyl-L-alanine + ADP + phosphate + H(+). The enzyme catalyses 2 D-alanine + ATP = D-alanyl-D-alanine + ADP + phosphate + H(+). Its pathway is cell wall biogenesis; peptidoglycan biosynthesis. Cell wall formation. The chain is Bifunctional enzyme MurC/Ddl (murC/ddl) from Chlamydia trachomatis serovar D (strain ATCC VR-885 / DSM 19411 / UW-3/Cx).